Here is a 74-residue protein sequence, read N- to C-terminus: Ribosome modulation factor (74 aa).

It belongs to the ribosome modulation factor family.

It is found in the cytoplasm. In terms of biological role, during stationary phase, converts 70S ribosomes to an inactive dimeric form (100S ribosomes). The polypeptide is Ribosome modulation factor (Cellvibrio japonicus (strain Ueda107) (Pseudomonas fluorescens subsp. cellulosa)).